The following is a 128-amino-acid chain: uncharacterized protein (128 aa).

This is an uncharacterized protein from Schizosaccharomyces pombe (strain 972 / ATCC 24843) (Fission yeast).